A 169-amino-acid polypeptide reads, in one-letter code: Peptide methionine sulfoxide reductase MsrA (169 aa).

The active site involves Cys-10.

The protein belongs to the MsrA Met sulfoxide reductase family.

It catalyses the reaction L-methionyl-[protein] + [thioredoxin]-disulfide + H2O = L-methionyl-(S)-S-oxide-[protein] + [thioredoxin]-dithiol. The catalysed reaction is [thioredoxin]-disulfide + L-methionine + H2O = L-methionine (S)-S-oxide + [thioredoxin]-dithiol. In terms of biological role, has an important function as a repair enzyme for proteins that have been inactivated by oxidation. Catalyzes the reversible oxidation-reduction of methionine sulfoxide in proteins to methionine. This is Peptide methionine sulfoxide reductase MsrA from Streptococcus pyogenes serotype M1.